A 141-amino-acid polypeptide reads, in one-letter code: Large ribosomal subunit protein uL16 (141 aa).

The protein belongs to the universal ribosomal protein uL16 family. In terms of assembly, part of the 50S ribosomal subunit.

Functionally, binds 23S rRNA and is also seen to make contacts with the A and possibly P site tRNAs. The sequence is that of Large ribosomal subunit protein uL16 from Nostoc punctiforme (strain ATCC 29133 / PCC 73102).